Here is a 282-residue protein sequence, read N- to C-terminus: Bifunctional protein FolD (282 aa).

Residues 165–167 (NRS), Ser-190, and Ile-231 each bind NADP(+).

It belongs to the tetrahydrofolate dehydrogenase/cyclohydrolase family. In terms of assembly, homodimer.

The enzyme catalyses (6R)-5,10-methylene-5,6,7,8-tetrahydrofolate + NADP(+) = (6R)-5,10-methenyltetrahydrofolate + NADPH. The catalysed reaction is (6R)-5,10-methenyltetrahydrofolate + H2O = (6R)-10-formyltetrahydrofolate + H(+). The protein operates within one-carbon metabolism; tetrahydrofolate interconversion. In terms of biological role, catalyzes the oxidation of 5,10-methylenetetrahydrofolate to 5,10-methenyltetrahydrofolate and then the hydrolysis of 5,10-methenyltetrahydrofolate to 10-formyltetrahydrofolate. The polypeptide is Bifunctional protein FolD (Clostridium botulinum (strain Kyoto / Type A2)).